Here is a 159-residue protein sequence, read N- to C-terminus: Endoribonuclease YbeY (159 aa).

Zn(2+) contacts are provided by His123, His127, and His133.

The protein belongs to the endoribonuclease YbeY family. Requires Zn(2+) as cofactor.

The protein resides in the cytoplasm. Functionally, single strand-specific metallo-endoribonuclease involved in late-stage 70S ribosome quality control and in maturation of the 3' terminus of the 16S rRNA. This is Endoribonuclease YbeY from Bacillus pumilus (strain SAFR-032).